The following is an 873-amino-acid chain: MSTTVTQVRTGSIPKTLKTSQIRVEEQEITELDTADIPLPPPSKEPTEVLSLDKTTPDSHVPRDPRLIRLTGVHPFNVEPPLTALFQQGFLTPPELFYVRNHGPVPHVRDEDIPNWELRIEGLVEKPITLSFKQILQNYDQITAPITLVCAGNRRKEQNTVRKSKGFSWGSAALSTALFTGPMMADIIKSAKPLRRAKYVCMEGADNLPNGNYGTSIKLNWAMDPNRGIMLAHKMNGEDLRPDHGRPLRAVVPGQIGGRSVKWLKKLIITDAPSDNWYHIYDNRVLPTMVTPDMSSQNPSWWRDERYAIYDLNVNSAAVYPQHKETLDLAAARPFYTAKGYAYAGGGRRITRVEISLDKGKSWRLARIEYAEDKYRDFEGTLYGGRVDMAWREACFCWSFWSLDIPVSELASSDALLVRAMDEALSLQPKDMYWSVLGMMNNPWFRVKITNENGRLLFEHPTDITGSSGWMEQIKKAGGDLTNGNWGERQEGEEPVEAEPVVEVNMKKEGVTRIIDLEEFKKNSSDERPWFVVNGEVYDGTAFLEGHPGGAQSIISAAGTDASEEFLEIHSETAKKMMPDYHIGTLDKASLEALRKGNADTTDSSSDPRPTFLTPKAWTKATLTKKTSVSSDTHIFTLSLEHPSQALGLPTGQHLMLKTPDPKSSSSGSIIRSYTPISPSDQLGMVDILIKIYAETPSIPGGKMTTALDTLPLGSVIECKGPTGRFEYLDRGRVLISGKERFVKSFVMICGGTGITPVFQVLRAVMQDEQDETKCVMLDGNRLEEDILLKNELDEFEALAGKKEKCKIVHTLTKGSESWTGRRGRIDEELIRQHAGTPDRETMVLVCGPEAMEKASKKILLSLGWKEENLHYF.

The disordered stretch occupies residues 30-61 (TELDTADIPLPPPSKEPTEVLSLDKTTPDSHV). Cys-150 lines the Mo-molybdopterin pocket. The 76-residue stretch at 512-587 (TRIIDLEEFK…MPDYHIGTLD (76 aa)) folds into the Cytochrome b5 heme-binding domain. Heme is bound by residues His-547 and His-570. One can recognise an FAD-binding FR-type domain in the interval 616–729 (KAWTKATLTK…KGPTGRFEYL (114 aa)). Residues 672–675 (RSYT), 689–693 (LIKIY), 703–705 (KMT), and Thr-756 contribute to the FAD site. Residue 843–852 (MVLVCGPEAM) coordinates NADP(+).

It belongs to the nitrate reductase family. Homodimer. The cofactor is FAD. It depends on heme as a cofactor. Mo-molybdopterin is required as a cofactor.

It carries out the reaction nitrite + NADP(+) + H2O = nitrate + NADPH + H(+). Functionally, nitrate reductase is a key enzyme involved in the first step of nitrate assimilation in plants, fungi and bacteria. This is Nitrate reductase [NADPH] (niaD) from Emericella nidulans (strain FGSC A4 / ATCC 38163 / CBS 112.46 / NRRL 194 / M139) (Aspergillus nidulans).